Consider the following 275-residue polypeptide: Undecaprenyl-diphosphatase (275 aa).

The next 8 helical transmembrane spans lie at 1 to 21 (MDWV…FLPI), 42 to 62 (VKDA…LVYY), 80 to 100 (TLWT…LAFG), 107 to 127 (LFKP…MWLI), 147 to 167 (SLLI…SRSA), 184 to 204 (TKFS…LNLV), 214 to 234 (IGLL…YLAI), and 249 to 269 (FAVY…TGVM).

It belongs to the UppP family.

It localises to the cell membrane. It catalyses the reaction di-trans,octa-cis-undecaprenyl diphosphate + H2O = di-trans,octa-cis-undecaprenyl phosphate + phosphate + H(+). Functionally, catalyzes the dephosphorylation of undecaprenyl diphosphate (UPP). Confers resistance to bacitracin. In Deinococcus deserti (strain DSM 17065 / CIP 109153 / LMG 22923 / VCD115), this protein is Undecaprenyl-diphosphatase.